The chain runs to 244 residues: Probable transcriptional regulatory protein CHY_1525 (244 aa).

It belongs to the TACO1 family.

Its subcellular location is the cytoplasm. The protein is Probable transcriptional regulatory protein CHY_1525 of Carboxydothermus hydrogenoformans (strain ATCC BAA-161 / DSM 6008 / Z-2901).